A 634-amino-acid chain; its full sequence is ABC transporter B family member 29, chloroplastic (634 aa).

A chloroplast-targeting transit peptide spans M1–R51. Transmembrane regions (helical) follow at residues T75–P95, L119–L139, L195–V215, A219–G239, I307–A327, and S330–V350. The ABC transmembrane type-1 domain maps to L77–Q362. The 238-residue stretch at V396–V633 folds into the ABC transporter domain. G430–T437 serves as a coordination point for ATP.

Belongs to the ABC transporter superfamily. ABCB family. Multidrug resistance exporter (TC 3.A.1.201) subfamily.

The protein resides in the plastid. The protein localises to the chloroplast membrane. The chain is ABC transporter B family member 29, chloroplastic (ABCB29) from Arabidopsis thaliana (Mouse-ear cress).